Consider the following 571-residue polypeptide: Arginine--tRNA ligase (571 aa).

The short motif at 122–132 (PNIAKEMHVGH) is the 'HIGH' region element.

The protein belongs to the class-I aminoacyl-tRNA synthetase family. As to quaternary structure, monomer.

It localises to the cytoplasm. It catalyses the reaction tRNA(Arg) + L-arginine + ATP = L-arginyl-tRNA(Arg) + AMP + diphosphate. The polypeptide is Arginine--tRNA ligase (Buchnera aphidicola subsp. Cinara cedri (strain Cc)).